A 364-amino-acid chain; its full sequence is Fructose-bisphosphate aldolase C-A (364 aa).

Residues arginine 56 and lysine 147 each contribute to the substrate site. Glutamate 188 acts as the Proton acceptor in catalysis. The Schiff-base intermediate with dihydroxyacetone-P role is filled by lysine 230.

Belongs to the class I fructose-bisphosphate aldolase family. In terms of assembly, homotetramer. Expressed specifically in Purkinje cells in the brain.

The catalysed reaction is beta-D-fructose 1,6-bisphosphate = D-glyceraldehyde 3-phosphate + dihydroxyacetone phosphate. Its pathway is carbohydrate degradation; glycolysis; D-glyceraldehyde 3-phosphate and glycerone phosphate from D-glucose: step 4/4. In Danio rerio (Zebrafish), this protein is Fructose-bisphosphate aldolase C-A.